Here is a 335-residue protein sequence, read N- to C-terminus: Oligopeptide transport ATP-binding protein OppD (335 aa).

Positions 18–267 (LEVNDLRVTF…PVHPYSIGLL (250 aa)) constitute an ABC transporter domain. 54–61 (GESGSGKS) provides a ligand contact to ATP.

The protein belongs to the ABC transporter superfamily. In terms of assembly, the complex is composed of two ATP-binding proteins (OppD and OppF), two transmembrane proteins (OppB and OppC) and a solute-binding protein (OppA).

The protein localises to the cell inner membrane. The catalysed reaction is a [peptide](out) + ATP + H2O = a [peptide](in) + ADP + phosphate + H(+). It carries out the reaction L-alanyl-gamma-D-glutamyl-meso-2,6-diaminopimelate(out) + ATP + H2O = L-alanyl-gamma-D-glutamyl-meso-2,6-diaminopimelate(in) + ADP + phosphate + H(+). Functionally, part of the ABC transporter complex OppABCDF involved in the uptake of oligopeptides, including the cell wall murein tripeptide L-alanyl-gamma-D-glutamyl-meso-diaminopimelate. Responsible for energy coupling to the transport system. Plays an important nutritional role and is involved in the recycling of cell wall peptides. Binds ATP. The protein is Oligopeptide transport ATP-binding protein OppD of Salmonella typhimurium (strain LT2 / SGSC1412 / ATCC 700720).